A 352-amino-acid polypeptide reads, in one-letter code: Chorismate synthase (352 aa).

Position 48 (arginine 48) interacts with NADP(+). FMN is bound by residues 125 to 127 (RSS), 237 to 238 (NA), glycine 278, 293 to 297 (KPTSS), and arginine 319.

This sequence belongs to the chorismate synthase family. In terms of assembly, homotetramer. The cofactor is FMNH2.

The enzyme catalyses 5-O-(1-carboxyvinyl)-3-phosphoshikimate = chorismate + phosphate. It functions in the pathway metabolic intermediate biosynthesis; chorismate biosynthesis; chorismate from D-erythrose 4-phosphate and phosphoenolpyruvate: step 7/7. Its function is as follows. Catalyzes the anti-1,4-elimination of the C-3 phosphate and the C-6 proR hydrogen from 5-enolpyruvylshikimate-3-phosphate (EPSP) to yield chorismate, which is the branch point compound that serves as the starting substrate for the three terminal pathways of aromatic amino acid biosynthesis. This reaction introduces a second double bond into the aromatic ring system. This chain is Chorismate synthase, found in Francisella tularensis subsp. tularensis (strain FSC 198).